A 79-amino-acid polypeptide reads, in one-letter code: Sec-independent protein translocase protein TatA (79 aa).

The chain crosses the membrane as a helical span at residues 1–21 (MGGISIWQLLIIALIVVLLFG). Residues 43–79 (MSSEEDKKALEDTEAAKTAQTTQQATEKKPESNKEQA) form a disordered region. The segment covering 46-57 (EEDKKALEDTEA) has biased composition (basic and acidic residues). The segment covering 58 to 67 (AKTAQTTQQA) has biased composition (low complexity). A compositionally biased stretch (basic and acidic residues) spans 68-79 (TEKKPESNKEQA).

The protein belongs to the TatA/E family. In terms of assembly, the Tat system comprises two distinct complexes: a TatABC complex, containing multiple copies of TatA, TatB and TatC subunits, and a separate TatA complex, containing only TatA subunits. Substrates initially bind to the TatABC complex, which probably triggers association of the separate TatA complex to form the active translocon.

It localises to the cell inner membrane. Its function is as follows. Part of the twin-arginine translocation (Tat) system that transports large folded proteins containing a characteristic twin-arginine motif in their signal peptide across membranes. TatA could form the protein-conducting channel of the Tat system. This Shewanella putrefaciens (strain CN-32 / ATCC BAA-453) protein is Sec-independent protein translocase protein TatA.